The primary structure comprises 717 residues: MTNSAMALPPTRINRRRSTKALHDFFSRPFTQRRSQSIAGVRVSPRISVTPSCTSSKHAMSNTIEISITIHDFATTETATQITCELYDNETECEDKWSKVGTSSPHRFSRNIVFTDKFSYQYVFEKTQLIKAVFSRCHDRDKPSSSSRDILATSIFKVDELIGSFGLQLRRQLEKNGNIASALSGTQRVTDEYLGGIIVSAEMPEKEQPIVVQFHGKSLDRKDFLWDETAVFFRVFRLEEGKDDDSLVFLYESEALKNHSHPQWAEFRLDTQDAADNRNRLLEIWVMYKDVDGKEGYIGKFLTTYAKMKYGPGSDNVYSVINDVKKAQKKSYENSGKMELVKFTDVSFYSFLDYIVSGTQLHFEIGVDFSSPEPVHELDQRRFDGELHMAIRAIGSIIRDYTPNRLFAAFGIGAKIPPTFHESNEFFLNFSMDPICRGLDGVMEAYRKTQTMVTPLKESKLSPVINYVTRMSHRSGFRGLHYHVLALFTRGEVTDLKEIQQALNSASDAPLSILIIGMGDFDFSSLQKLCSKRKDGRRDVVQFIHLKSLLNGAEAPWLNKSRIAETALRHVPQHMVQYMHNANIAAKPPIQVCRSPLFHSSSLIPDKPTEFDFDLANKRPSVGIEIPSLMPNLILPPDLSPRPRQDRRGSDTQYLDVEIMRGSLTVRVPERCHSVLQTSREQYQRRLKERGLARMKFPRVELSTLESSGGSTQDSSL.

The C2 domain maps to tyrosine 193–tyrosine 318. One can recognise a VWFA domain in the interval glutamate 377–alanine 567.

This sequence belongs to the copine family.

In Caenorhabditis elegans, this protein is Copine family protein 5 (cpna-5).